A 2521-amino-acid polypeptide reads, in one-letter code: MEPHVLGAVLYWLLLPCALLAACLLRFSGLSLVYLLFLLLLPWFPGPTRCGLQGHTGRLLRALLGLSLLFLVAHLALQICLHIVPRLDQLLGPSCSRWETLSRHIGVTRLDLKDIPNAIRLVAPDLGILVVSSVCLGICGRLARNTRQSPHPRELDDDERDVDASPTAGLQEAATLAPTRRSRLAARFRVTAHWLLVAAGRVLAVTLLALAGIAHPSALSSVYLLLFLALCTWWACHFPISTRGFSRLCVAVGCFGAGHLICLYCYQMPLAQALLPPAGIWARVLGLKDFVGPTNCSSPHALVLNTGLDWPVYASPGVLLLLCYATASLRKLRAYRPSGQRKEAAKGYEARELELAELDQWPQERESDQHVVPTAPDTEADNCIVHELTGQSSVLRRPVRPKRAEPREASPLHSLGHLIMDQSYVCALIAMMVWSITYHSWLTFVLLLWACLIWTVRSRHQLAMLCSPCILLYGMTLCCLRYVWAMDLRPELPTTLGPVSLRQLGLEHTRYPCLDLGAMLLYTLTFWLLLRQFVKEKLLKWAESPAALTEVTVADTEPTRTQTLLQSLGELVKGVYAKYWIYVCAGMFIVVSFAGRLVVYKIVYMFLFLLCLTLFQVYYSLWRKLLKAFWWLVVAYTMLVLIAVYTFQFQDFPAYWRNLTGFTDEQLGDLGLEQFSVSELFSSILVPGFFLLACILQLHYFHRPFMQLTDMEHVSLPGTRLPRWAHRQDAVSGTPLLREEQQEHQQQQQEEEEEEEDSRDEGLGVATPHQATQVPEGAAKWGLVAERLLELAAGFSDVLSRVQVFLRRLLELHVFKLVALYTVWVALKEVSVMNLLLVVLWAFALPYPRFRPMASCLSTVWTCVIIVCKMLYQLKVVNPQEYSSNCTEPFPNSTNLLPTEISQSLLYRGPVDPANWFGVRKGFPNLGYIQNHLQVLLLLVFEAIVYRRQEHYRRQHQLAPLPAQAVFASGTRQQLDQDLLGCLKYFINFFFYKFGLEICFLMAVNVIGQRMNFLVTLHGCWLVAILTRRHRQAIARLWPNYCLFLALFLLYQYLLCLGMPPALCIDYPWRWSRAVPMNSALIKWLYLPDFFRAPNSTNLISDFLLLLCASQQWQVFSAERTEEWQRMAGVNTDRLEPLRGEPNPVPNFIHCRSYLDMLKVAVFRYLFWLVLVVVFVTGATRISIFGLGYLLACFYLLLFGTALLQRDTRARLVLWDCLILYNVTVIISKNMLSLLACVFVEQMQTGFCWVIQLFSLVCTVKGYYDPKEMMDRDQDCLLPVEEAGIIWDSVCFFFLLLQRRVFLSHYYLHVRADLQATALLASRGFALYNAANLKSIDFHRRIEEKSLAQLKRQMERIRAKQEKHRQGRVDRSRPQDTLGPKDPGLEPGPDSPGGSSPPRRQWWRPWLDHATVIHSGDYFLFESDSEEEEEAVPEDPRPSAQSAFQLAYQAWVTNAQAVLRRRQQEQEQARQEQAGQLPTGGGPSQEVEPAEGPEEAAAGRSHVVQRVLSTAQFLWMLGQALVDELTRWLQEFTRHHGTMSDVLRAERYLLTQELLQGGEVHRGVLDQLYTSQAEATLPGPTEAPNAPSTVSSGLGAEEPLSSMTDDMGSPLSTGYHTRSGSEEAVTDPGEREAGASLYQGLMRTASELLLDRRLRIPELEEAELFAEGQGRALRLLRAVYQCVAAHSELLCYFIIILNHMVTASAGSLVLPVLVFLWAMLSIPRPSKRFWMTAIVFTEIAVVVKYLFQFGFFPWNSHVVLRRYENKPYFPPRILGLEKTDGYIKYDLVQLMALFFHRSQLLCYGLWDHEEDSPSKEHDKSGEEEQGAEEGPGVPAATTEDHIQVEARVGPTDGTPEPQVELRPRDTRRISLRFRRRKKEGPARKGAAAIEAEDREEEEGEEEKEAPTGREKRPSRSGGRVRAAGRRLQGFCLSLAQGTYRPLRRFFHDILHTKYRAATDVYALMFLADVVDFIIIIFGFWAFGKHSAATDITSSLSDDQVPEAFLVMLLIQFSTMVVDRALYLRKTVLGKLAFQVALVLAIHLWMFFILPAVTERMFNQNVVAQLWYFVKCIYFALSAYQIRCGYPTRILGNFLTKKYNHLNLFLFQGFRLVPFLVELRAVMDWVWTDTTLSLSSWMCVEDIYANIFIIKCSRETEKKYPQPKGQKKKKIVKYGMGGLIILFLIAIIWFPLLFMSLVRSVVGVVNQPIDVTVTLKLGGYEPLFTMSAQQPSIIPFTAQAYEELSRQFDPQPLAMQFISQYSPEDIVTAQIEGSSGALWRISPPSRAQMKRELYNGTADITLRFTWNFQRDLAKGGTVEYANEKHMLALAPNSTARRQLASLLEGTSDQSVVIPNLFPKYIRAPNGPEANPVKQLQPNEEADYLGVRIQLRREQGAGATGFLEWWVIELQECRTDCNLLPMVIFSDKVSPPSLGFLAGYGIMGLYVSIVLVIGKFVRGFFSEISHSIMFEELPCVDRILKLCQDIFLVRETRELELEEELYAKLIFLYRSPETMIKWTREKE.

Residues 1-12 (MEPHVLGAVLYW) are Cytoplasmic-facing. A helical transmembrane segment spans residues 13-25 (LLLPCALLAACLL). Over 26–28 (RFS) the chain is Extracellular. Residues 29 to 44 (GLSLVYLLFLLLLPWF) traverse the membrane as a helical segment. Topologically, residues 45–58 (PGPTRCGLQGHTGR) are cytoplasmic. The helical transmembrane segment at 59-81 (LLRALLGLSLLFLVAHLALQICL) threads the bilayer. Over 82–121 (HIVPRLDQLLGPSCSRWETLSRHIGVTRLDLKDIPNAIRL) the chain is Extracellular. A helical transmembrane segment spans residues 122–138 (VAPDLGILVVSSVCLGI). At 139–194 (CGRLARNTRQSPHPRELDDDERDVDASPTAGLQEAATLAPTRRSRLAARFRVTAHW) the chain is on the cytoplasmic side. The chain crosses the membrane as a helical span at residues 195–214 (LLVAAGRVLAVTLLALAGIA). Residues 215–216 (HP) lie on the Extracellular side of the membrane. The helical transmembrane segment at 217–236 (SALSSVYLLLFLALCTWWAC) threads the bilayer. Over 237–247 (HFPISTRGFSR) the chain is Cytoplasmic. A helical membrane pass occupies residues 248 to 268 (LCVAVGCFGAGHLICLYCYQM). The Extracellular segment spans residues 269-309 (PLAQALLPPAGIWARVLGLKDFVGPTNCSSPHALVLNTGLD). N-linked (GlcNAc...) asparagine glycosylation is present at Asn295. The chain crosses the membrane as a helical span at residues 310–330 (WPVYASPGVLLLLCYATASLR). Residues 331–417 (KLRAYRPSGQ…EASPLHSLGH (87 aa)) are Cytoplasmic-facing. The helical transmembrane segment at 418–438 (LIMDQSYVCALIAMMVWSITY) threads the bilayer. The Extracellular segment spans residues 439–440 (HS). Residues 441-456 (WLTFVLLLWACLIWTV) form a helical membrane-spanning segment. Residues 457 to 461 (RSRHQ) lie on the Cytoplasmic side of the membrane. The chain crosses the membrane as a helical span at residues 462–484 (LAMLCSPCILLYGMTLCCLRYVW). Topologically, residues 485-512 (AMDLRPELPTTLGPVSLRQLGLEHTRYP) are extracellular. Residues 513-530 (CLDLGAMLLYTLTFWLLL) form a helical membrane-spanning segment. Topologically, residues 531-574 (RQFVKEKLLKWAESPAALTEVTVADTEPTRTQTLLQSLGELVKG) are cytoplasmic. Residues 575 to 595 (VYAKYWIYVCAGMFIVVSFAG) form a helical membrane-spanning segment. Position 596 (Arg596) is a topological domain, extracellular. The chain crosses the membrane as a helical span at residues 597–617 (LVVYKIVYMFLFLLCLTLFQV). At 618 to 627 (YYSLWRKLLK) the chain is on the cytoplasmic side. A helical membrane pass occupies residues 628 to 649 (AFWWLVVAYTMLVLIAVYTFQF). At 650–679 (QDFPAYWRNLTGFTDEQLGDLGLEQFSVSE) the chain is on the extracellular side. The helical transmembrane segment at 680–696 (LFSSILVPGFFLLACIL) threads the bilayer. Residues 697–816 (QLHYFHRPFM…RRLLELHVFK (120 aa)) are Cytoplasmic-facing. Thr734 bears the Phosphothreonine mark. The tract at residues 738–769 (REEQQEHQQQQQEEEEEEEDSRDEGLGVATPH) is disordered. Acidic residues predominate over residues 749-759 (QEEEEEEEDSR). Position 758 is a phosphoserine (Ser758). The chain crosses the membrane as a helical span at residues 817–828 (LVALYTVWVALK). The Extracellular segment spans residues 829–831 (EVS). A helical transmembrane segment spans residues 832 to 845 (VMNLLLVVLWAFAL). Residues 846 to 859 (PYPRFRPMASCLST) lie on the Cytoplasmic side of the membrane. Residues 860 to 874 (VWTCVIIVCKMLYQL) traverse the membrane as a helical segment. Residues 875 to 926 (KVVNPQEYSSNCTEPFPNSTNLLPTEISQSLLYRGPVDPANWFGVRKGFPNL) lie on the Extracellular side of the membrane. Residues 927–954 (GYIQNHLQVLLLLVFEAIVYRRQEHYRR) traverse the membrane as a helical segment. Topologically, residues 955–994 (QHQLAPLPAQAVFASGTRQQLDQDLLGCLKYFINFFFYKF) are cytoplasmic. The helical transmembrane segment at 995–1010 (GLEICFLMAVNVIGQR) threads the bilayer. Over 1011–1012 (MN) the chain is Extracellular. The helical transmembrane segment at 1013–1028 (FLVTLHGCWLVAILTR) threads the bilayer. Topologically, residues 1029-1041 (RHRQAIARLWPNY) are cytoplasmic. The helical transmembrane segment at 1042 to 1057 (CLFLALFLLYQYLLCL) threads the bilayer. The Extracellular portion of the chain corresponds to 1058 to 1096 (GMPPALCIDYPWRWSRAVPMNSALIKWLYLPDFFRAPNS). Residues 1097-1118 (TNLISDFLLLLCASQQWQVFSA) traverse the membrane as a helical segment. The Cytoplasmic portion of the chain corresponds to 1119–1153 (ERTEEWQRMAGVNTDRLEPLRGEPNPVPNFIHCRS). Residues 1154-1180 (YLDMLKVAVFRYLFWLVLVVVFVTGAT) traverse the membrane as a helical segment. The Extracellular segment spans residues 1181–1185 (RISIF). Residues 1186-1204 (GLGYLLACFYLLLFGTALL) traverse the membrane as a helical segment. Over 1205–1217 (QRDTRARLVLWDC) the chain is Cytoplasmic. Residues 1218 to 1236 (LILYNVTVIISKNMLSLLA) traverse the membrane as a helical segment. Over 1237–1285 (CVFVEQMQTGFCWVIQLFSLVCTVKGYYDPKEMMDRDQDCLLPVEEAGI) the chain is Extracellular. The helical transmembrane segment at 1286 to 1302 (IWDSVCFFFLLLQRRVF) threads the bilayer. Over 1303–1656 (LSHYYLHVRA…ELLLDRRLRI (354 aa)) the chain is Cytoplasmic. The stretch at 1339 to 1368 (HRRIEEKSLAQLKRQMERIRAKQEKHRQGR) forms a coiled coil. 3 disordered regions span residues 1356–1402 (RIRA…RRQW), 1462–1498 (RQQEQEQARQEQAGQLPTGGGPSQEVEPAEGPEEAAA), and 1576–1630 (TLPG…DPGE). The segment covering 1385–1398 (LEPGPDSPGGSSPP) has biased composition (low complexity). Ser1391 and Ser1396 each carry phosphoserine. Ser1636 and Ser1646 each carry phosphoserine. The chain crosses the membrane as a helical span at residues 1657 to 1700 (PELEEAELFAEGQGRALRLLRAVYQCVAAHSELLCYFIIILNHM). Over 1701 to 1704 (VTAS) the chain is Extracellular. A helical transmembrane segment spans residues 1705–1720 (AGSLVLPVLVFLWAML). The Cytoplasmic portion of the chain corresponds to 1721 to 1728 (SIPRPSKR). Residues 1729–1747 (FWMTAIVFTEIAVVVKYLF) form a helical membrane-spanning segment. Over 1748 to 1779 (QFGFFPWNSHVVLRRYENKPYFPPRILGLEKT) the chain is Extracellular. Residues 1780-1801 (DGYIKYDLVQLMALFFHRSQLL) traverse the membrane as a helical segment. At 1802–1960 (CYGLWDHEED…HTKYRAATDV (159 aa)) the chain is on the cytoplasmic side. Basic and acidic residues predominate over residues 1811 to 1822 (DSPSKEHDKSGE). The disordered stretch occupies residues 1811 to 1921 (DSPSKEHDKS…RPSRSGGRVR (111 aa)). Thr1854 bears the Phosphothreonine mark. Basic and acidic residues predominate over residues 1859-1868 (VELRPRDTRR). The span at 1869–1878 (ISLRFRRRKK) shows a compositional bias: basic residues. Residues 1890–1903 (EAEDREEEEGEEEK) are compositionally biased toward acidic residues. Residues 1904–1913 (EAPTGREKRP) are compositionally biased toward basic and acidic residues. A helical membrane pass occupies residues 1961-1980 (YALMFLADVVDFIIIIFGFW). Topologically, residues 1981-2000 (AFGKHSAATDITSSLSDDQV) are extracellular. Residues 2001 to 2017 (PEAFLVMLLIQFSTMVV) form a helical membrane-spanning segment. The Cytoplasmic segment spans residues 2018 to 2031 (DRALYLRKTVLGKL). A helical membrane pass occupies residues 2032–2052 (AFQVALVLAIHLWMFFILPAV). Over 2053 to 2060 (TERMFNQN) the chain is Extracellular. A helical membrane pass occupies residues 2061 to 2076 (VVAQLWYFVKCIYFAL). Residues 2077–2176 (SAYQIRCGYP…KKKIVKYGMG (100 aa)) are Cytoplasmic-facing. Residues 2177 to 2197 (GLIILFLIAIIWFPLLFMSLV) traverse the membrane as a helical segment. Residues 2198 to 2431 (RSVVGVVNQP…IFSDKVSPPS (234 aa)) lie on the Extracellular side of the membrane. The N-linked (GlcNAc...) asparagine glycan is linked to Asn2294. A disulfide bridge connects residues Cys2411 and Cys2415. Residues 2432–2452 (LGFLAGYGIMGLYVSIVLVIG) traverse the membrane as a helical segment. Topologically, residues 2453 to 2521 (KFVRGFFSEI…TMIKWTREKE (69 aa)) are cytoplasmic.

It belongs to the PIEZO (TC 1.A.75) family. In terms of assembly, homotrimer; the homotrimer forms a propeller-shaped Piezo channel with a cation-ion conducting pore. Heterotrimeric interaction may occur between PIEZO1 and PIEZO2. Interacts with PKD2. Interacts with STOML3. Interacts with TMC1, TMC2, PCDH15 and CIB2; the interaction may be part of the MET complex. Interacts with MDFIC (via C-terminus); the interaction prolongs Piezo channel inactivation. Interacts with MDFI (via C-terminus); the interaction prolongs Piezo channel inactivation. In terms of tissue distribution, expressed in numerous tissues. In normal brain, expressed exclusively in neurons, not in astrocytes. In Alzheimer disease brains, expressed in about half of the activated astrocytes located around classical senile plaques. In Parkinson disease substantia nigra, not detected in melanin-containing neurons nor in activated astrocytes. Expressed in erythrocytes (at protein level). Expressed in myoblasts (at protein level).

It is found in the endoplasmic reticulum membrane. The protein resides in the endoplasmic reticulum-Golgi intermediate compartment membrane. It localises to the cell membrane. Its subcellular location is the cell projection. The protein localises to the lamellipodium membrane. The enzyme catalyses K(+)(in) = K(+)(out). It catalyses the reaction Na(+)(in) = Na(+)(out). It carries out the reaction Ca(2+)(in) = Ca(2+)(out). The catalysed reaction is Mg(2+)(in) = Mg(2+)(out). Regulated by auxillary subunits MDFIC and MDFI. Down-regulated by phosphatidylserines exposed on the cell surface. Divalent ions decrease the single-channel permeability of K(+). Pore-forming subunit of the mechanosensitive non-specific cation Piezo channel required for rapidly adapting mechanically activated (MA) currents and has a key role in sensing touch and tactile pain. Piezo channels are homotrimeric three-blade propeller-shaped structures that utilize a cap-motion and plug-and-latch mechanism to gate their ion-conducting pathways. Generates currents characterized by a linear current-voltage relationship that are sensitive to ruthenium red and gadolinium. Conductance to monovalent alkali ions is highest for K(+), intermediate for Na(+) and lowest for Li(+). Divalent ions except for Mn(2+) permeate the channel but more slowly than the monovalent ions and they also reduce K(+) currents. Plays a key role in epithelial cell adhesion by maintaining integrin activation through R-Ras recruitment to the ER, most probably in its activated state, and subsequent stimulation of calpain signaling. In inner ear hair cells, PIEZO1/2 subunits may constitute part of the mechanotransducer (MET) non-selective cation channel complex where they may act as pore-forming ion-conducting component in the complex. In the kidney, may contribute to the detection of intraluminal pressure changes and to urine flow sensing. Acts as a shear-stress sensor that promotes endothelial cell organization and alignment in the direction of blood flow through calpain activation. Plays a key role in blood vessel formation and vascular structure in both development and adult physiology. Acts as a sensor of phosphatidylserine (PS) flipping at the plasma membrane and governs morphogenesis of muscle cells. In myoblasts, flippase-mediated PS enrichment at the inner leaflet of plasma membrane triggers channel activation and Ca2+ influx followed by Rho GTPases signal transduction, leading to assembly of cortical actomyosin fibers and myotube formation. This is Piezo-type mechanosensitive ion channel component 1 from Homo sapiens (Human).